A 451-amino-acid chain; its full sequence is Phosphoglucosamine mutase (451 aa).

S107 acts as the Phosphoserine intermediate in catalysis. Mg(2+) is bound by residues S107, D246, D248, and D250. The residue at position 107 (S107) is a Phosphoserine.

Belongs to the phosphohexose mutase family. Mg(2+) serves as cofactor. Activated by phosphorylation.

It catalyses the reaction alpha-D-glucosamine 1-phosphate = D-glucosamine 6-phosphate. Functionally, catalyzes the conversion of glucosamine-6-phosphate to glucosamine-1-phosphate. The chain is Phosphoglucosamine mutase from Burkholderia ambifaria (strain MC40-6).